Consider the following 31-residue polypeptide: leu operon leader peptide (31 aa).

Functionally, involved in control of the biosynthesis of leucine. In Buchnera aphidicola subsp. Rhopalosiphum padi, this protein is leu operon leader peptide (leuL).